Here is a 562-residue protein sequence, read N- to C-terminus: MTWLEPQIKSQLQSERKDWEANEVGAFLKKAPERKEQFHTIGDFPVQRTYTAADIADTPLEDIGLPGRYPFTRGPYPTMYRSRTWTMRQIAGFGTGEDTNKRFKYLIAQGQTGISTDFDMPTLMGYDSDHPMSDGEVGREGVAIDTLADMEALLADIDLEKISVSFTINPSAWILLAMYVALGEKRGYDLNKLSGTVQADILKEYMAQKEYIYPIAPSVRIVRDIITYSAKNLKRYNPINISGYHISEAGSSPLQEAAFTLANLITYVNEVTKTGMHVDEFAPRLAFFFVSQGDFFEEVAKFRALRRCYAKIMKERFGARNPESMRLRFHCQTAAATLTKPQYMVNVVRTSLQALSAVLGGAQSLHTNGYDEAFAIPTEDAMKMALRTQQIIAEESGVADVIDPLGGSYYVEALTTEYEKKIFEILEEVEKRGGTIKLIEQGWFQKQIADFAYETALRKQSGQKPVIGVNRFVENEEDVKIEIHPYDNTTAERQISRTRRVRAERDEAKVQAMLDQLVAVAKDESQNLMPLTIELVKAGATMGDIVEKLKGIWGTYRETPVF.

(3S)-3-hydroxybutanoyl-CoA contacts are provided by residues 76–79, 86–88, aspartate 117, 196–198, arginine 235, asparagine 240, histidine 245, and arginine 284; these read YPTM, TMR, and TVQ.

Belongs to the acyl-CoA mutase large subunit family. Homotetramer composed of two large substrate-binding subunits (HcmA) and two small cobalamin-binding subunits (HcmB).

It carries out the reaction 2-hydroxyisobutanoyl-CoA = (3S)-3-hydroxybutanoyl-CoA. Its function is as follows. Together with HcmB, catalyzes the isomerization of 2-hydroxyisobutyryl-CoA and 3-hydroxybutyryl-CoA. Is specific for 2-hydroxyisobutyryl-CoA and (S)-3-hydroxybutyryl-CoA, and shows only very low activity with (R)-3-hydroxybutyryl-CoA, isobutyryl-CoA and butyryl-CoA. In vitro, can isomerize pivalyl-CoA and isovaleryl-CoA, with much lower efficiency. Plays a central role in the degradation of substrates bearing a tert-butyl moiety, such as the fuel oxygenate methyl tert-butyl ether (MTBE) and its metabolites. This is 2-hydroxyisobutanoyl-CoA mutase large subunit from Aquincola tertiaricarbonis.